The sequence spans 112 residues: Divalent-cation tolerance protein CutA (112 aa).

Cu cation contacts are provided by cysteine 16, histidine 83, and histidine 84.

It belongs to the CutA family. Homotrimer. Cu cation is required as a cofactor.

It localises to the cytoplasm. Functionally, involved in resistance toward heavy metals. The protein is Divalent-cation tolerance protein CutA of Shigella flexneri.